The following is a 204-amino-acid chain: Histone chaperone ASF1A (204 aa).

Residues 1–156 (MAKVQVNNVV…TRFHINWEDN (156 aa)) form an interaction with histone H3, CHAF1B, and HIRA region. The Required for interaction with HIRA motif lies at 31–37 (IEDLSED). Positions 155–204 (DNTEKLEDAESSNPNLPSLLSTDALPSASKGWSTSENSLNVMLESHMDCM) are required for interaction with HIRA. Position 192 is a phosphoserine; by TLK2 (serine 192).

The protein belongs to the ASF1 family. Interacts with histone H3 (via C-terminus), including histone H3.1, H3.2 and H3.3, and histone H4; the interaction with H3 is direct. Probably interacts with the heterodimeric form of H3-H4 taking the place of the second dimer. Interacts with the CHAF1A, CHAF1B and RBBP4 subunits of the CAF-1 complex. Interacts with CABIN1, HAT1, HIRA, NASP, TAF1 and UBN1. Found in a soluble complex with NASP and histones H3 and H4; the interaction with NASP is probably indirect and mediated by H3-H4. Interacts with CDAN1. Found in a cytosolic complex with IPO4 and histones H3 and H4. Interacts with CREBBP. Phosphorylated by TLK1 and TLK2. Highly phosphorylated in S-phase and at lower levels in M-phase. TLK2-mediated phosphorylation at Ser-192 prevents proteasome-dependent degradation.

It is found in the nucleus. Its function is as follows. Histone chaperone that facilitates histone deposition and histone exchange and removal during nucleosome assembly and disassembly. Cooperates with chromatin assembly factor 1 (CAF-1) to promote replication-dependent chromatin assembly and with HIRA to promote replication-independent chromatin assembly. Promotes homologous recombination-mediated repair of double-strand breaks (DSBs) at stalled or collapsed replication forks: acts by mediating histone replacement at DSBs, leading to recruitment of the MMS22L-TONSL complex and subsequent loading of RAD51. Also involved in the nuclear import of the histone H3-H4 dimer together with importin-4 (IPO4): specifically recognizes and binds newly synthesized histones with the monomethylation of H3 'Lys-9' and acetylation at 'Lys-14' (H3K9me1K14ac) marks, and diacetylation at 'Lys-5' and 'Lys-12' of H4 (H4K5K12ac) marks in the cytosol. Required for the formation of senescence-associated heterochromatin foci (SAHF) and efficient senescence-associated cell cycle exit. In Bos taurus (Bovine), this protein is Histone chaperone ASF1A (ASF1A).